Reading from the N-terminus, the 136-residue chain is Large-conductance mechanosensitive channel (136 aa).

2 helical membrane-spanning segments follow: residues 9-29 (AFAV…GAAF) and 78-98 (FIQT…GVKA).

Belongs to the MscL family. In terms of assembly, homopentamer.

It localises to the cell inner membrane. Its function is as follows. Channel that opens in response to stretch forces in the membrane lipid bilayer. May participate in the regulation of osmotic pressure changes within the cell. In Azotobacter vinelandii (strain DJ / ATCC BAA-1303), this protein is Large-conductance mechanosensitive channel.